Here is a 240-residue protein sequence, read N- to C-terminus: Probable phosphatase Pcar_2586 (240 aa).

The Zn(2+) site is built by histidine 12, histidine 14, histidine 20, histidine 45, glutamate 78, histidine 105, histidine 136, aspartate 197, and histidine 199.

This sequence belongs to the PHP family. Requires Zn(2+) as cofactor.

In Syntrophotalea carbinolica (strain DSM 2380 / NBRC 103641 / GraBd1) (Pelobacter carbinolicus), this protein is Probable phosphatase Pcar_2586.